Consider the following 265-residue polypeptide: 3-methyl-2-oxobutanoate hydroxymethyltransferase (265 aa).

2 residues coordinate Mg(2+): Asp-45 and Asp-84. 3-methyl-2-oxobutanoate contacts are provided by residues 45 to 46 (DS), Asp-84, and Lys-114. Glu-116 lines the Mg(2+) pocket. Glu-183 (proton acceptor) is an active-site residue.

The protein belongs to the PanB family. As to quaternary structure, homodecamer; pentamer of dimers. Mg(2+) serves as cofactor.

The protein localises to the cytoplasm. The catalysed reaction is 3-methyl-2-oxobutanoate + (6R)-5,10-methylene-5,6,7,8-tetrahydrofolate + H2O = 2-dehydropantoate + (6S)-5,6,7,8-tetrahydrofolate. Its pathway is cofactor biosynthesis; (R)-pantothenate biosynthesis; (R)-pantoate from 3-methyl-2-oxobutanoate: step 1/2. Its function is as follows. Catalyzes the reversible reaction in which hydroxymethyl group from 5,10-methylenetetrahydrofolate is transferred onto alpha-ketoisovalerate to form ketopantoate. The protein is 3-methyl-2-oxobutanoate hydroxymethyltransferase of Salinibacter ruber (strain DSM 13855 / M31).